The chain runs to 49 residues: Large ribosomal subunit protein bL33A (49 aa).

The protein belongs to the bacterial ribosomal protein bL33 family.

The polypeptide is Large ribosomal subunit protein bL33A (Levilactobacillus brevis (strain ATCC 367 / BCRC 12310 / CIP 105137 / JCM 1170 / LMG 11437 / NCIMB 947 / NCTC 947) (Lactobacillus brevis)).